We begin with the raw amino-acid sequence, 477 residues long: Oleate hydroxylase FAH12 (477 aa).

The segment at 26 to 48 is disordered; that stretch reads YESSAAVSPAESPRTSASSTSLS. The span at 27–48 shows a compositional bias: low complexity; the sequence is ESSAAVSPAESPRTSASSTSLS. The next 2 membrane-spanning stretches (helical) occupy residues 101–118 and 133–153; these read AYVL…YLFH and FVLW…LWVI. A Histidine box-1 motif is present at residues 155–159; it reads HECGH. The chain crosses the membrane as a helical span at residues 167-187; it reads FISDLTGWVIHSALLVPYFSW. Residues 191–195 carry the Histidine box-2 motif; it reads HSAHH. 3 consecutive transmembrane segments (helical) span residues 234–254, 299–319, and 327–347; these read PIYT…SYLM, YIVL…YLGN, and AVWY…ITFL.

This sequence belongs to the fatty acid desaturase type 1 family.

It localises to the microsome membrane. The catalysed reaction is (9Z)-octadecenoate + AH2 + O2 = (12R)-hydroxy-(9Z)-octadecenoate + A + H2O. It functions in the pathway lipid metabolism; monounsaturated fatty acid biosynthesis. In terms of biological role, oleate hydroxylase involved in the biosynthesis of ricinoleate (12-hydroxy-cis-9-octadecenoate), that is present at high levels in C.purpurea sclerotium tissue. Exhibits delta(12) hydroxylase activity on 16C and 18C monounsaturated fatty acids (i.e. oleic and palmitoleic acids), and, to a lower extent, gamma(3) hydroxylase activity on ricinoleate. This Claviceps purpurea (Ergot fungus) protein is Oleate hydroxylase FAH12.